The primary structure comprises 276 residues: Cytoplasmic envelopment protein 1 (276 aa).

The protein belongs to the herpesviridae cytoplasmic envelopment protein 1 family.

Its subcellular location is the virion. The protein localises to the virion tegument. It is found in the host cytoplasm. It localises to the host Golgi apparatus. Its function is as follows. Plays a critical role in cytoplasmic virus egress. Participates in the final step of tegumentation and envelope acquisition within the host cytoplasm. This chain is Cytoplasmic envelopment protein 1 (42), found in Equus caballus (Horse).